We begin with the raw amino-acid sequence, 424 residues long: Sulfate adenylyltransferase (424 aa).

The protein belongs to the sulfate adenylyltransferase family.

It catalyses the reaction sulfate + ATP + H(+) = adenosine 5'-phosphosulfate + diphosphate. Its pathway is sulfur metabolism; hydrogen sulfide biosynthesis; sulfite from sulfate: step 1/3. The protein is Sulfate adenylyltransferase of Desulfatibacillum aliphaticivorans.